The sequence spans 225 residues: MSVILPESHPEHPFNLIPELCRRFYDLGWATGTGGGISIKMGDNYYVAPSGVQKERIKSNEIFVLNSSQDIVEKPRTDKQLKMSECTPLFFNAYRMRNAGACLHTHSVKCVLISLLCDREFRISHIEMLKGISNNETKKALGFRDTLIVPIIENTDFEKDLTASMAECMEKYPESCAVLVRRHGMYVWSDTWQKAKGAVECIDYLMGLAIQMKQLGLEWEPKDVK.

C86 contributes to the substrate binding site. H104 and H106 together coordinate Zn(2+). Residue E127 is the Proton donor/acceptor of the active site. A Zn(2+)-binding site is contributed by H183.

It belongs to the aldolase class II family. MtnB subfamily. Requires Zn(2+) as cofactor.

The protein localises to the cytoplasm. The catalysed reaction is 5-(methylsulfanyl)-D-ribulose 1-phosphate = 5-methylsulfanyl-2,3-dioxopentyl phosphate + H2O. It participates in amino-acid biosynthesis; L-methionine biosynthesis via salvage pathway; L-methionine from S-methyl-5-thio-alpha-D-ribose 1-phosphate: step 2/6. Its function is as follows. Catalyzes the dehydration of methylthioribulose-1-phosphate (MTRu-1-P) into 2,3-diketo-5-methylthiopentyl-1-phosphate (DK-MTP-1-P). The chain is Probable methylthioribulose-1-phosphate dehydratase from Leishmania braziliensis.